A 539-amino-acid polypeptide reads, in one-letter code: Phenylalanine--tRNA ligase beta subunit (539 aa).

The B5 domain maps to 271–347; it reads LSPARWTVTT…KSYGYENLKA (77 aa). Mg(2+) is bound by residues Asp-325, Asp-331, Glu-334, and Asp-335.

This sequence belongs to the phenylalanyl-tRNA synthetase beta subunit family. Type 2 subfamily. As to quaternary structure, tetramer of two alpha and two beta subunits. Mg(2+) is required as a cofactor.

The protein resides in the cytoplasm. The catalysed reaction is tRNA(Phe) + L-phenylalanine + ATP = L-phenylalanyl-tRNA(Phe) + AMP + diphosphate + H(+). This Methanothrix thermoacetophila (strain DSM 6194 / JCM 14653 / NBRC 101360 / PT) (Methanosaeta thermophila) protein is Phenylalanine--tRNA ligase beta subunit.